We begin with the raw amino-acid sequence, 245 residues long: 1-(5-phosphoribosyl)-5-[(5-phosphoribosylamino)methylideneamino] imidazole-4-carboxamide isomerase (245 aa).

The active-site Proton acceptor is D8. The Proton donor role is filled by D130.

The protein belongs to the HisA/HisF family.

The protein resides in the cytoplasm. It carries out the reaction 1-(5-phospho-beta-D-ribosyl)-5-[(5-phospho-beta-D-ribosylamino)methylideneamino]imidazole-4-carboxamide = 5-[(5-phospho-1-deoxy-D-ribulos-1-ylimino)methylamino]-1-(5-phospho-beta-D-ribosyl)imidazole-4-carboxamide. The protein operates within amino-acid biosynthesis; L-histidine biosynthesis; L-histidine from 5-phospho-alpha-D-ribose 1-diphosphate: step 4/9. This chain is 1-(5-phosphoribosyl)-5-[(5-phosphoribosylamino)methylideneamino] imidazole-4-carboxamide isomerase, found in Pseudomonas syringae pv. tomato (strain ATCC BAA-871 / DC3000).